Consider the following 265-residue polypeptide: Undecaprenyl-diphosphatase 1 (265 aa).

7 helical membrane passes run 4–24, 42–62, 84–104, 108–128, 184–204, 217–237, and 245–265; these read IITA…PISS, AKTF…ILYH, FHVF…HDVI, LFQP…MIFA, SEFS…LDLL, MFAV…VTFL, and LKPF…FVLL.

Belongs to the UppP family.

The protein localises to the cell membrane. It carries out the reaction di-trans,octa-cis-undecaprenyl diphosphate + H2O = di-trans,octa-cis-undecaprenyl phosphate + phosphate + H(+). Functionally, catalyzes the dephosphorylation of undecaprenyl diphosphate (UPP). Confers resistance to bacitracin. This is Undecaprenyl-diphosphatase 1 from Bacillus anthracis.